A 1516-amino-acid chain; its full sequence is Vacuolar protein sorting/targeting protein 10 (1516 aa).

Positions Met-1 to Ala-26 are cleaved as a signal peptide. The Lumenal segment spans residues Lys-27 to Gly-1390. A BNR 1 repeat occupies Tyr-108 to Thr-118. N-linked (GlcNAc...) asparagine glycosylation is found at Asn-311 and Asn-336. BNR repeat units lie at residues Gln-390–Glu-400, Tyr-451–Lys-461, and Tyr-495–Glu-504. Residues Gly-642–Asn-709 form a disordered region. A compositionally biased stretch (basic and acidic residues) spans Ala-671–Ser-682. Gly residues predominate over residues Glu-683–Gly-693. 3 BNR repeats span residues Trp-756–Lys-766, Tyr-798–His-807, and Ile-852–Lys-861. Asn-917 and Asn-1007 each carry an N-linked (GlcNAc...) asparagine glycan. BNR repeat units lie at residues Phe-1137–Lys-1147 and Tyr-1184–Asn-1193. An N-linked (GlcNAc...) asparagine glycan is attached at Asn-1342. A helical transmembrane segment spans residues Trp-1391–Val-1411. Residues Trp-1412–Pro-1441 are Cytoplasmic-facing. The chain crosses the membrane as a helical span at residues Val-1442–Leu-1462. The Lumenal segment spans residues Trp-1463 to Val-1516.

It belongs to the VPS10-related sortilin family.

The protein resides in the golgi apparatus. It is found in the trans-Golgi network membrane. The protein localises to the prevacuolar compartment membrane. Its function is as follows. Functions as a sorting receptor in the Golgi compartment required for the intracellular sorting and delivery of soluble vacuolar proteins, like carboxypeptidase Y (CPY) and proteinase A. Executes multiple rounds of sorting by cycling between the late Golgi and a prevacuolar endosome-like compartment. This Fusarium vanettenii (strain ATCC MYA-4622 / CBS 123669 / FGSC 9596 / NRRL 45880 / 77-13-4) (Fusarium solani subsp. pisi) protein is Vacuolar protein sorting/targeting protein 10 (VPS10).